Consider the following 55-residue polypeptide: ATP synthase small subunit 6, mitochondrial (55 aa).

A mitochondrion-targeting transit peptide spans 1–15 (MRQFDPWPVFFRREW). The chain crosses the membrane as a helical span at residues 20–39 (PFLVGFAVTGAIITKMSLGF).

It belongs to the ATPase 6 subunit family.

It is found in the mitochondrion inner membrane. Mitochondrial membrane ATP synthase (F(1)F(0) ATP synthase or Complex V) produces ATP from ADP in the presence of a proton gradient across the membrane which is generated by electron transport complexes of the respiratory chain. F-type ATPases consist of two structural domains, F(1) - containing the extramembraneous catalytic core and F(0) - containing the membrane proton channel, linked together by a central stalk and a peripheral stalk. During catalysis, ATP synthesis in the catalytic domain of F(1) is coupled via a rotary mechanism of the central stalk subunits to proton translocation. Part of the complex F(0) domain. Confers tolerance to several abiotic stresses (e.g. salt, mannitol, drought, oxidative and cold stresses), probably by providing additional energy needed for cell homeostasis. The polypeptide is ATP synthase small subunit 6, mitochondrial (Solanum tuberosum (Potato)).